The primary structure comprises 287 residues: tRNA pseudouridine synthase B (287 aa).

Aspartate 38 serves as the catalytic Nucleophile.

Belongs to the pseudouridine synthase TruB family. Type 1 subfamily.

It carries out the reaction uridine(55) in tRNA = pseudouridine(55) in tRNA. Functionally, responsible for synthesis of pseudouridine from uracil-55 in the psi GC loop of transfer RNAs. This is tRNA pseudouridine synthase B from Aquifex aeolicus (strain VF5).